The chain runs to 157 residues: Protein GrpE (157 aa).

Over residues 1–10 (MQEENQHPEQ) the composition is skewed to basic and acidic residues. A disordered region spans residues 1–21 (MQEENQHPEQDDISEAQDAGA).

It belongs to the GrpE family. Homodimer.

The protein localises to the cytoplasm. Its function is as follows. Participates actively in the response to hyperosmotic and heat shock by preventing the aggregation of stress-denatured proteins, in association with DnaK and GrpE. It is the nucleotide exchange factor for DnaK and may function as a thermosensor. Unfolded proteins bind initially to DnaJ; upon interaction with the DnaJ-bound protein, DnaK hydrolyzes its bound ATP, resulting in the formation of a stable complex. GrpE releases ADP from DnaK; ATP binding to DnaK triggers the release of the substrate protein, thus completing the reaction cycle. Several rounds of ATP-dependent interactions between DnaJ, DnaK and GrpE are required for fully efficient folding. This chain is Protein GrpE, found in Methylovorus sp. (strain SS1 / DSM 11726).